The primary structure comprises 109 residues: Spermidine export protein MdtI (109 aa).

The next 4 helical transmembrane spans lie at 6-26, 36-56, 64-84, and 88-108; these read WIHA…NVFL, IYGI…SQAV, AYAL…WVLF, and LNNK…LIKL.

This sequence belongs to the drug/metabolite transporter (DMT) superfamily. Small multidrug resistance (SMR) (TC 2.A.7.1) family. MdtI subfamily. In terms of assembly, forms a complex with MdtJ.

It is found in the cell inner membrane. In terms of biological role, catalyzes the excretion of spermidine. The chain is Spermidine export protein MdtI from Klebsiella pneumoniae subsp. pneumoniae (strain ATCC 700721 / MGH 78578).